Consider the following 374-residue polypeptide: Guanine nucleotide-binding protein subunit alpha-15 (374 aa).

One can recognise a G-alpha domain in the interval 41-374; sequence EELKLLLLGP…ARYLDEINLL (334 aa). Residues 44-57 form a G1 motif region; sequence KLLLLGPGESGKST. Residues 49–56, 183–189, 208–212, 277–280, and Ala346 each bind GTP; these read GPGESGKS, LRSRMPT, DVGGQ, and NKTD. Positions 56 and 189 each coordinate Mg(2+). Residues 181 to 189 form a G2 motif region; that stretch reads DVLRSRMPT. The G3 motif stretch occupies residues 204–213; sequence LRIVDVGGQR. The interval 273–280 is G4 motif; sequence ILFLNKTD. The tract at residues 344–349 is G5 motif; it reads TCATDT.

It belongs to the G-alpha family. G(q) subfamily. G proteins are composed of 3 units; alpha, beta and gamma. The alpha chain contains the guanine nucleotide binding site. Expressed primarily in hematopoietic cells. Coexpressed with EDG6 at the same relative levels in all tissues examined, with the highest levels in adult spleen and lung.

In terms of biological role, guanine nucleotide-binding proteins (G proteins) are involved as modulators or transducers in various transmembrane signaling systems. The polypeptide is Guanine nucleotide-binding protein subunit alpha-15 (Gna15) (Mus musculus (Mouse)).